The chain runs to 1356 residues: Kinesin-like protein KIF24 (1356 aa).

Residues Met-1–Met-64 form the SAM domain. The disordered stretch occupies residues Gly-93–Ser-119. Ser-102 carries the post-translational modification Phosphoserine. The Kinesin motor domain occupies Lys-218–Leu-541. Gly-308–Thr-315 contributes to the ATP binding site. At Ser-473 the chain carries Phosphoserine. Residues Ser-473 to Val-702 are interaction with MPHOSPH9. Polar residues predominate over residues Thr-552–Val-571. Disordered regions lie at residues Thr-552 to Lys-581, Pro-597 to Glu-664, Glu-788 to Leu-840, Arg-897 to Pro-947, and Val-964 to Asp-998. A Phosphoserine modification is found at Ser-579. A Phosphothreonine; by NEK2 modification is found at Thr-615. Ser-616 bears the Phosphoserine; by NEK2 mark. Phosphoserine is present on residues Ser-640, Ser-817, and Ser-820. Over residues Ser-640 to Lys-653 the composition is skewed to basic residues. Acidic residues predominate over residues Gln-810–Glu-821. The segment covering Gln-830–Leu-840 has biased composition (polar residues). The span at Gly-970–Asn-979 shows a compositional bias: polar residues. Ser-1008 bears the Phosphoserine mark. Residues Leu-1109 to Gly-1140 form a disordered region.

The protein belongs to the TRAFAC class myosin-kinesin ATPase superfamily. Kinesin family. Interacts with CCP110, CEP97, TALPID3. Interacts with MPHOSPH9. Expressed in brain, spinal cord, and small intestine.

The protein localises to the cytoplasm. It is found in the cytoskeleton. Its subcellular location is the microtubule organizing center. The protein resides in the centrosome. It localises to the centriole. Functionally, microtubule-dependent motor protein that acts as a negative regulator of ciliogenesis by mediating recruitment of CCP110 to mother centriole in cycling cells, leading to restrict nucleation of cilia at centrioles. Mediates depolymerization of microtubules of centriolar origin, possibly to suppress aberrant cilia formation. Following activation by NEK2 involved in disassembly of primary cilium during G2/M phase but does not disassemble fully formed ciliary axonemes. As cilium assembly and disassembly is proposed to coexist in a dynamic equilibrium may suppress nascent cilium assembly and, potentially, ciliar re-assembly in cells that have already disassembled their cilia ensuring the completion of cilium removal in the later stages of the cell cycle. Plays an important role in recruiting MPHOSPH9, a negative regulator of cilia formation to the distal end of mother centriole. This Mus musculus (Mouse) protein is Kinesin-like protein KIF24 (Kif24).